The following is a 523-amino-acid chain: ATP synthase subunit alpha (523 aa).

Gly-179 to Thr-186 contacts ATP.

This sequence belongs to the ATPase alpha/beta chains family. As to quaternary structure, F-type ATPases have 2 components, CF(1) - the catalytic core - and CF(0) - the membrane proton channel. CF(1) has five subunits: alpha(3), beta(3), gamma(1), delta(1), epsilon(1). CF(0) has three main subunits: a(1), b(2) and c(9-12). The alpha and beta chains form an alternating ring which encloses part of the gamma chain. CF(1) is attached to CF(0) by a central stalk formed by the gamma and epsilon chains, while a peripheral stalk is formed by the delta and b chains.

It localises to the cell inner membrane. The catalysed reaction is ATP + H2O + 4 H(+)(in) = ADP + phosphate + 5 H(+)(out). Produces ATP from ADP in the presence of a proton gradient across the membrane. The alpha chain is a regulatory subunit. This chain is ATP synthase subunit alpha, found in Vibrio vulnificus (strain YJ016).